The sequence spans 516 residues: Putative sel1-like repeat-containing protein R850 (516 aa).

Sel1-like repeat units follow at residues 103 to 138 and 230 to 265; these read ALTY…NMNS and SISQ…KQGD.

This chain is Putative sel1-like repeat-containing protein R850, found in Acanthamoeba polyphaga (Amoeba).